Consider the following 630-residue polypeptide: GATA-type transcription factor SRE1 (630 aa).

2 disordered regions span residues 1-139 and 162-203; these read MTGL…TPLW and DRPT…RLTD. Polar residues-rich tracts occupy residues 66–82, 115–133, and 175–196; these read DNTQ…QLQN, KAQS…NCGT, and YGSS…TNDG. Residues 128-152 form a GATA-type 1 zinc finger; sequence CSNCGTKRTPLWRRSPTGATICNAC. Residues 219–237 are cystein-rich region (CRR); the sequence is CPGGGSCNGTGGAEGCDGC. Residues 256–283 form a disordered region; sequence HTPRTSPQVSTQGGPGSTEGDAGSSNPE. Polar residues predominate over residues 258 to 267; sequence PRTSPQVSTQ. A GATA-type 2 zinc finger spans residues 291–315; it reads CQNCQTTVTPLWRRDENGHPICNAC. The interval 339–609 is disordered; sequence KRVVPAMREQ…AKAERRARLQ (271 aa). The segment covering 349-363 has biased composition (polar residues); sequence SPPSATQSSNGSVSP. Low complexity-rich tracts occupy residues 436 to 447 and 492 to 503; these read NNHNNGETTNTH and SSSSASFPNNNP. The segment covering 504-513 has biased composition (polar residues); that stretch reads GRFNSISSLL. Positions 558–568 are enriched in low complexity; that stretch reads SHSPPRFSPSL. Basic and acidic residues predominate over residues 595-609; sequence VDHRDAKAERRARLQ. Residues 595–630 adopt a coiled-coil conformation; that stretch reads VDHRDAKAERRARLQREAQDMREALKAKERELALLE.

It localises to the nucleus. Its function is as follows. GATA-type transcription repressor that regulates iron- acquisition genes through specific binding the GATA sequence element 5'-(G/A)ATC(T/A)GATAA-3' of target promoters in an iron- and zinc-dependent manner. Regulation occurs via direct binding of iron ions. Iron acquisition regulation is critical for survival under both iron-limiting conditions (to acquire essential iron) and iron-replete conditions (to limit iron toxicity). SRE1 targets include genes encoding a number of key iron-regulated factors such as those involved in siderophore biosynthesis, presumed ferric reductase activity, iron-responsive transcriptional regulation, oxidative stress response, as well as genes encoding a number of putative oxidoreductases, metabolic and mitochondrial enzymes, superoxide dismutase, and genes previously identified as induced during nitrosative stress. This Ajellomyces capsulatus (Darling's disease fungus) protein is GATA-type transcription factor SRE1.